Consider the following 182-residue polypeptide: Hexose transport activator protein (182 aa).

The interval 46–65 is disordered; sequence GIWGPMEKKPGGVGKKKGSE.

Its function is as follows. Multicopy expression suppresses glucose-uptake defects in various yeast mutants. In Saccharomyces cerevisiae (strain ATCC 204508 / S288c) (Baker's yeast), this protein is Hexose transport activator protein (AHT1).